The following is a 271-amino-acid chain: Autophagy-related protein 5 (271 aa).

K145 participates in a covalent cross-link: Glycyl lysine isopeptide (Lys-Gly) (interchain with G-Cter in ATG12).

Belongs to the ATG5 family. As to quaternary structure, conjugated with ATG12. Interacts with ATG10. The ATG5-ATG12 conjugate forms a complex with several units of ATG16. The ATG12-ATG5 conjugate also associates with ATG3. Post-translationally, conjugated to ATG12; which is essential for autophagy. Conjugation with ATG12 involves ATG7 as an E1-like activating enzyme and ATG10 as an E2-like conjugating enzyme.

It is found in the preautophagosomal structure membrane. Functionally, involved in cytoplasm to vacuole transport (Cvt) and autophagic vesicle formation. Autophagy is essential for maintenance of amino acid levels and protein synthesis under nitrogen starvation. Required for selective autophagic degradation of the nucleus (nucleophagy). Also required for mitophagy, which eliminates defective or superfluous mitochondria in order to fulfill cellular energy requirements and prevent excess ROS production. Conjugation with ATG12, through a ubiquitin-like conjugating system involving ATG7 as an E1-like activating enzyme and ATG10 as an E2-like conjugating enzyme, is essential for its function. The ATG12-ATG5 conjugate acts as an E3-like enzyme which is required for lipidation of ATG8 and ATG8 association to the vesicle membranes. ATG12-ATG5 rearranges the ATG3 catalytic center and enhances its E2 activity. This Kluyveromyces marxianus (strain DMKU3-1042 / BCC 29191 / NBRC 104275) (Yeast) protein is Autophagy-related protein 5.